Consider the following 366-residue polypeptide: Ribosomal RNA large subunit methyltransferase M (366 aa).

S-adenosyl-L-methionine-binding positions include Ser188, 221–224, Asp240, Asp260, and Asp277; that span reads CPGG. Lys306 serves as the catalytic Proton acceptor.

This sequence belongs to the class I-like SAM-binding methyltransferase superfamily. RNA methyltransferase RlmE family. RlmM subfamily. In terms of assembly, monomer.

The protein localises to the cytoplasm. The catalysed reaction is cytidine(2498) in 23S rRNA + S-adenosyl-L-methionine = 2'-O-methylcytidine(2498) in 23S rRNA + S-adenosyl-L-homocysteine + H(+). Catalyzes the 2'-O-methylation at nucleotide C2498 in 23S rRNA. In Salmonella agona (strain SL483), this protein is Ribosomal RNA large subunit methyltransferase M.